The primary structure comprises 1325 residues: MVLRLEGSWSLLVGKRFLSLSGDDDGPWDTERVAEWPWQAGRIRAVSHTDISKPDLKICVEFDDESWEKRRWIEVYSPKMKVFLVEQKLVLAERRSHGGSISPVQWPAMTYKSLVDKAGLGPMVSIRYLGEEKCVFLSKDLLTPIQDVESSRLPLKDDQTVNEEIQALVKKHLDETRLVQGGKNIIGSKIRIYSLDPSTQWFTAVVVNGNPATRTLEVNCQEIPALKTLDPELIHVEIIYDNNGKCDKSKRIGGVKRKPSENSGSVDAKHTKSSPEVSQSQGHVHSVPTVFGEALLGCTPANKDQRHQGLPLPANSPPNLGAETPQGTCRRSVPEVHPSCLNAGTKPLKENLTLFPKVTYITKEQTQNINDQNGKYTSLISSRSSSLSDSTNGKETGLKNISEPLLKPTTNFPKECISAKPLQHLNSSIAIPRVNSSVELQRTLDCRPSTSDAHLLPFTEAGVRSHSGSNSQKGNKVDEHVEMEFFTRRNSNEAFYERNENESFWTGSTKIQDNVIVRKSILADASKVKKLQQSGEAFVQDGSCNNIAPHLHKCRECRLDSYRKNKDQKDSTVFCRFFHFRRLQFNKHGILREEGFLTPNKYDPEAISLWLPLSKNVVGLDLDTAKYILANIGDHFCQLVISEKEVMSTIEPHRQVAWKRAVRGVREMCDVCDTTIFNLRWVCSKCGFGVCVDCYRMRKKGIHEDDDSDTFSWFKCVKGQEHEPENLMPTQIIPGRALYDVGDIVHSVRTKWGIKANCPCANKQFKALSKPTLKEDSKQNLVPGERTSLQQSNLVLSPQLPTHEPPVKPAAGSKQTASVTTSPSLSWLSNITSGNVNKENKEKLLVPISKNENKALQTLPSLAKPAAALQTFNSAILTPVSNNNTGFLRNLLNSSGGKTDNGLKSTPKILDDIFASLVQNRTVTDMPKKPQGLTIKPTIMGFDTPHYWLCDNRLLCLQDPNNESNWNVFRECWKQGQPVMVSGVHHKLNADLWRPESFRKEFGQQEVDLVNCRTNEIITGATVGDFWDGFEDISSRLRTEEGEPMVLKLKDWPPGEDFRDMMPSRFDDLMKNIPLPEYTRRGGKLNLASRLPNYFVRPDLGPKMYNAYGLITPEDRKYGTTNLHLDVSDAANVMVYVGIPKGQADQEEEVLKTIQDGDSDELTIKRFTESREKPGALWHIYAAKDTEKIREFLKKVAEEQGQENPVDHDPIHDQSWYLDRSLRKRLHQEYGVQGWAIVQFLGDVVFIPAGAPHQVHNLYSCIKVAEDFVSPEHVKHCFWLTQEFRYLSHTHTNHEDKLQVKNVIYHAVKDAVGILRANESSLSRS.

Disordered regions lie at residues Ser-249–Val-284, Pro-300–Val-333, and Gln-372–Lys-399. The segment covering Ser-274–His-283 has biased composition (polar residues). Residues Ser-378–Ser-390 show a composition bias toward low complexity. The C6-type zinc finger occupies Cys-669–Cys-694. Disordered stretches follow at residues Thr-772 to Gln-791 and Pro-798 to Val-819. An LXXLL motif motif is present at residues Leu-888–Leu-892. The JmjC domain occupies Met-1062 to Arg-1285. His-1124, Asp-1126, and His-1253 together coordinate Fe cation.

The protein belongs to the JHDM2 histone demethylase family. The cofactor is Fe(2+).

Its subcellular location is the cytoplasm. The protein resides in the nucleus. The catalysed reaction is N(6),N(6)-dimethyl-L-lysyl(9)-[histone H3] + 2 2-oxoglutarate + 2 O2 = L-lysyl(9)-[histone H3] + 2 formaldehyde + 2 succinate + 2 CO2. Its function is as follows. Histone demethylase that specifically demethylates 'Lys-9' of histone H3, thereby playing a central role in histone code. Preferentially demethylates mono- and dimethylated H3 'Lys-9' residue, with a preference for dimethylated residue, while it has weak or no activity on trimethylated H3 'Lys-9'. Demethylation of Lys residue generates formaldehyde and succinate. The sequence is that of Lysine-specific demethylase 3A (KDM3A) from Gallus gallus (Chicken).